We begin with the raw amino-acid sequence, 185 residues long: Peptidyl-tRNA hydrolase (185 aa).

Y14 is a binding site for tRNA. Residue H19 is the Proton acceptor of the active site. Residues F64, N66, and N112 each contribute to the tRNA site.

Belongs to the PTH family. Monomer.

It localises to the cytoplasm. The catalysed reaction is an N-acyl-L-alpha-aminoacyl-tRNA + H2O = an N-acyl-L-amino acid + a tRNA + H(+). In terms of biological role, hydrolyzes ribosome-free peptidyl-tRNAs (with 1 or more amino acids incorporated), which drop off the ribosome during protein synthesis, or as a result of ribosome stalling. Catalyzes the release of premature peptidyl moieties from peptidyl-tRNA molecules trapped in stalled 50S ribosomal subunits, and thus maintains levels of free tRNAs and 50S ribosomes. The sequence is that of Peptidyl-tRNA hydrolase from Halalkalibacterium halodurans (strain ATCC BAA-125 / DSM 18197 / FERM 7344 / JCM 9153 / C-125) (Bacillus halodurans).